Consider the following 363-residue polypeptide: Palmitoyltransferase ZDHHC9 (363 aa).

Topologically, residues 1–35 are cytoplasmic; it reads MSVMVVRKKVTRKWEKLPGRNTFCCDGRVMMARQK. Residues 36 to 56 traverse the membrane as a helical segment; the sequence is GIFYLTLFLILGTCTLFFAFE. The Lumenal portion of the chain corresponds to 57 to 63; it reads CRYLAVQ. Residues 64 to 84 form a helical membrane-spanning segment; it reads LSPAIPVFAAMLFLFSMATLL. Over 85–183 the chain is Cytoplasmic; that stretch reads RTSFSDPGVI…NCVGKRNYRY (99 aa). A DHHC domain is found at 139–189; that stretch reads KYCYTCKIFRPPRASHCSICDNCVERFDHHCPWVGNCVGKRNYRYFYLFIL. The S-palmitoyl cysteine intermediate role is filled by Cys-169. A helical transmembrane segment spans residues 184–204; the sequence is FYLFILSLSLLTIYVFAFNIV. Topologically, residues 205-228 are lumenal; it reads YVALKSLKIGFLETLKETPGTVLE. A helical membrane pass occupies residues 229-249; the sequence is VLICFFTLWSVVGLTGFHTFL. At 250–363 the chain is on the cytoplasmic side; sequence VALNQTTNED…PPQEVTEAEK (114 aa). Residues 303 to 363 are disordered; the sequence is PLEESGSRPP…PPQEVTEAEK (61 aa). Polar residues predominate over residues 310–322; it reads RPPSTQEASTSLL. The segment covering 345–355 has biased composition (pro residues); it reads EMPPPEPPEPP.

Belongs to the DHHC palmitoyltransferase family. ERF2/ZDHHC9 subfamily. Interacts with GOLGA7.

It localises to the endoplasmic reticulum membrane. Its subcellular location is the golgi apparatus membrane. The catalysed reaction is L-cysteinyl-[protein] + hexadecanoyl-CoA = S-hexadecanoyl-L-cysteinyl-[protein] + CoA. Its function is as follows. Palmitoyltransferase that catalyzes the addition of palmitate onto various protein substrates, such as ADRB2, GSDMD, HRAS, NRAS and CGAS. The ZDHHC9-GOLGA7 complex is a palmitoyltransferase specific for HRAS and NRAS. May have a palmitoyltransferase activity toward the beta-2 adrenergic receptor/ADRB2 and therefore regulate G protein-coupled receptor signaling. Acts as a regulator of innate immunity by catalyzing palmitoylation of CGAS, thereby promoting CGAS homodimerization and cyclic GMP-AMP synthase activity. Activates pyroptosis by catalyzing palmitoylation of gasdermin-D (GSDMD), thereby promoting membrane translocation and pore formation of GSDMD. This chain is Palmitoyltransferase ZDHHC9 (ZDHHC9), found in Bos taurus (Bovine).